A 1401-amino-acid chain; its full sequence is DNA-directed RNA polymerase subunit beta' (1401 aa).

The Zn(2+) site is built by Cys-71, Cys-73, Cys-86, and Cys-89. Mg(2+) is bound by residues Asp-462, Asp-464, and Asp-466. Zn(2+) is bound by residues Cys-810, Cys-884, Cys-891, and Cys-894. Residues 1377–1401 (RRKGTGAESATPMLADMANDPAAAE) form a disordered region.

Belongs to the RNA polymerase beta' chain family. In terms of assembly, the RNAP catalytic core consists of 2 alpha, 1 beta, 1 beta' and 1 omega subunit. When a sigma factor is associated with the core the holoenzyme is formed, which can initiate transcription. Requires Mg(2+) as cofactor. Zn(2+) serves as cofactor.

The enzyme catalyses RNA(n) + a ribonucleoside 5'-triphosphate = RNA(n+1) + diphosphate. Functionally, DNA-dependent RNA polymerase catalyzes the transcription of DNA into RNA using the four ribonucleoside triphosphates as substrates. The chain is DNA-directed RNA polymerase subunit beta' from Rhizobium meliloti (strain 1021) (Ensifer meliloti).